The primary structure comprises 1198 residues: Rac guanine nucleotide exchange factor B (1198 aa).

The tract at residues 1–104 (MFSNFFGSSK…QHQGVITSLQ (104 aa)) is disordered. A compositionally biased stretch (low complexity) spans 8–20 (SSKRNTIASSSSS). The span at 21-34 (SKKDKDNGKDESSK) shows a compositional bias: basic and acidic residues. Polar residues predominate over residues 35 to 58 (LKNSGSSTLPKPITNNESGNNFIT). Over residues 59 to 97 (SPSVSSPLISPLSSSPSPLLSSSSNSIQSTSHQQQQQHQ) the composition is skewed to low complexity. The 107-residue stretch at 126-232 (SSLEQTARKW…NIVVLGKHAS (107 aa)) folds into the Calponin-homology (CH) 1 domain. Positions 260–284 (FGGNHNNNNNNNNNNNTSNGDLSPV) are disordered. Low complexity predominate over residues 263–275 (NHNNNNNNNNNNN). 2 Calponin-homology (CH) domains span residues 341 to 449 (PELQ…NKMY) and 511 to 619 (PEDM…ENFD). Residues 632-846 (RRQKVIEEII…KRVADHVNES (215 aa)) form the DH domain. The 151-residue stretch at 876–1026 (TYIREGFLEI…WMEDLRSCLQ (151 aa)) folds into the PH domain. Residues 940–952 (GEACVDGDDDGGE) show a composition bias toward acidic residues. 2 disordered regions span residues 940-989 (GEAC…SNKS) and 1076-1198 (NNNN…IDNQ). Composition is skewed to low complexity over residues 977-989 (NSNN…SNKS) and 1076-1118 (NNNN…NNND). A compositionally biased stretch (acidic residues) spans 1155–1167 (DETISDTESDDYE). Residues 1188–1198 (FSDTIKNIDNQ) are compositionally biased toward polar residues.

As to quaternary structure, binds to F-actin.

Its subcellular location is the late endosome. Involved in the regulation of the late steps of the endocytic pathway. The polypeptide is Rac guanine nucleotide exchange factor B (gxcB) (Dictyostelium discoideum (Social amoeba)).